Reading from the N-terminus, the 156-residue chain is Endoribonuclease YbeY (156 aa).

3 residues coordinate Zn(2+): histidine 122, histidine 126, and histidine 132.

The protein belongs to the endoribonuclease YbeY family. Zn(2+) is required as a cofactor.

It localises to the cytoplasm. Its function is as follows. Single strand-specific metallo-endoribonuclease involved in late-stage 70S ribosome quality control and in maturation of the 3' terminus of the 16S rRNA. The chain is Endoribonuclease YbeY from Geobacillus kaustophilus (strain HTA426).